Reading from the N-terminus, the 507-residue chain is Phospho-2-dehydro-3-deoxyheptonate aldolase 2, chloroplastic (507 aa).

The protein belongs to the class-II DAHP synthase family.

It localises to the plastid. The protein resides in the chloroplast. It catalyses the reaction D-erythrose 4-phosphate + phosphoenolpyruvate + H2O = 7-phospho-2-dehydro-3-deoxy-D-arabino-heptonate + phosphate. It participates in metabolic intermediate biosynthesis; chorismate biosynthesis; chorismate from D-erythrose 4-phosphate and phosphoenolpyruvate: step 1/7. This Arabidopsis thaliana (Mouse-ear cress) protein is Phospho-2-dehydro-3-deoxyheptonate aldolase 2, chloroplastic (DHS2).